The chain runs to 639 residues: Altered inheritance of mitochondria protein 9, mitochondrial (639 aa).

Residues 1-45 (MLMSKAPKLGNLLSKNSIKIVSGSKLRCNLKYINVRYISDTPDKV) constitute a mitochondrion transit peptide. Residues 619 to 639 (VSSEAQSEVQSEVQSSTENKD) are disordered.

The protein belongs to the AIM9 family.

It localises to the mitochondrion. The protein is Altered inheritance of mitochondria protein 9, mitochondrial (AIM9) of Vanderwaltozyma polyspora (strain ATCC 22028 / DSM 70294 / BCRC 21397 / CBS 2163 / NBRC 10782 / NRRL Y-8283 / UCD 57-17) (Kluyveromyces polysporus).